Reading from the N-terminus, the 146-residue chain is Interleukin-3 (146 aa).

The signal sequence occupies residues 1–17; it reads MSSLSILHLLLLLLSLH. An N-linked (GlcNAc...) asparagine glycan is attached at asparagine 65.

The protein belongs to the IL-3 family. As to quaternary structure, monomer. Activated T-cells, mast cells, natural killer cells.

Its subcellular location is the secreted. Its function is as follows. Granulocyte/macrophage colony-stimulating factors are cytokines that act in hematopoiesis by controlling the production, differentiation, and function of 2 related white cell populations of the blood, the granulocytes and the monocytes-macrophages. Functionally, this CSF induces granulocytes, macrophages, mast cells, stem cells, erythroid cells, eosinophils and megakaryocytes. This Ovis aries (Sheep) protein is Interleukin-3 (IL3).